A 227-amino-acid chain; its full sequence is Mitochondrial inner membrane protease ATP23 (227 aa).

His-129 contacts a divalent metal cation. Residue Glu-130 is part of the active site. Residue His-133 participates in a divalent metal cation binding.

The protein belongs to the peptidase M76 family.

It localises to the mitochondrion inner membrane. Its function is as follows. Has a dual role in the assembly of mitochondrial ATPase. Acts as a protease that removes N-terminal residues of mitochondrial ATPase CF(0) subunit 6 at the intermembrane space side. Also involved in the correct assembly of the membrane-embedded ATPase CF(0) particle, probably mediating association of subunit 6 with the subunit 9 ring. This is Mitochondrial inner membrane protease ATP23 (ATP23) from Cryptococcus neoformans var. neoformans serotype D (strain B-3501A) (Filobasidiella neoformans).